A 376-amino-acid polypeptide reads, in one-letter code: Methionine import ATP-binding protein MetN 1 (376 aa).

The 240-residue stretch at 34–273 (VRFINLGKTY…PQHEVSKTLL (240 aa)) folds into the ABC transporter domain. 70–77 (GRSGAGKS) is a binding site for ATP.

Belongs to the ABC transporter superfamily. Methionine importer (TC 3.A.1.24) family. As to quaternary structure, the complex is composed of two ATP-binding proteins (MetN), two transmembrane proteins (MetI) and a solute-binding protein (MetQ).

It localises to the cell inner membrane. The catalysed reaction is L-methionine(out) + ATP + H2O = L-methionine(in) + ADP + phosphate + H(+). It carries out the reaction D-methionine(out) + ATP + H2O = D-methionine(in) + ADP + phosphate + H(+). Its function is as follows. Part of the ABC transporter complex MetNIQ involved in methionine import. Responsible for energy coupling to the transport system. This chain is Methionine import ATP-binding protein MetN 1, found in Pseudomonas syringae pv. tomato (strain ATCC BAA-871 / DC3000).